The primary structure comprises 498 residues: Neuronal acetylcholine receptor subunit beta-4 (498 aa).

The first 21 residues, 1–21 (MRRAPSLVLFFLVALCGRGNC), serve as a signal peptide directing secretion. At 22 to 239 (RVANAEEKLM…RKPLFYTINL (218 aa)) the chain is on the extracellular side. N-linked (GlcNAc...) asparagine glycosylation is found at Asn-36, Asn-93, Asn-138, and Asn-166. Cys-153 and Cys-167 are joined by a disulfide. The helical transmembrane segment at 240-255 (IIPCVLTTLLAILVFY) threads the bilayer. The Cytoplasmic portion of the chain corresponds to 256-261 (LPSDCG). Position 262 (Glu-262) interacts with Na(+). A helical transmembrane segment spans residues 262 to 277 (EKMTLCISVLLALTFF). The Extracellular segment spans residues 278–296 (LLLISKIVPPTSLDVPLIG). Residues 297 to 321 (KYLMFTMVLVTFSIVTSVCVLNVHH) form a helical membrane-spanning segment. Residues 322-454 (RSPSTHTMAP…QSVVEDWKYV (133 aa)) lie on the Cytoplasmic side of the membrane. Residues 357-377 (ARAFPPSKSCVTKPEATATST) form a disordered region. The helical transmembrane segment at 455–478 (AMVVDRLFLWVFMFVCVLGTVGLF) threads the bilayer. Over 479–498 (LPPLFQTHAASEGPYAAQRD) the chain is Extracellular.

Belongs to the ligand-gated ion channel (TC 1.A.9) family. Acetylcholine receptor (TC 1.A.9.1) subfamily. Beta-4/CHRNB4 sub-subfamily. Neuronal AChR is composed of two different types of subunits: alpha and beta. CHRNB4/Beta-4 subunit can be combined to CHRNA2/alpha-2, CHRNA3/alpha-3 or CHRNA4/alpha-4, CHRNA5/alpha-5 and CHRNB3/beta-3 to give rise to functional receptors. Forms stoichiometries such as (CHRNA3)2:(CHRNB4)3 or (CHRNA3:CHRNB4)2:CHRNB3. Interacts with RIC3; which is required for proper folding and assembly. Interacts with LYPD6.

It localises to the synaptic cell membrane. The protein localises to the cell membrane. It catalyses the reaction Ca(2+)(in) = Ca(2+)(out). The enzyme catalyses K(+)(in) = K(+)(out). The catalysed reaction is Na(+)(in) = Na(+)(out). Its activity is regulated as follows. Activated by a myriad of ligands such as acetylcholine, cytisine, nicotine, choline and epibatidine. The heteropentamer CHRNA3:CHRNB4 activity is blocked by the alpha-conotoxin ImI and AuIB. Functionally, component of neuronal acetylcholine receptors (nAChRs) that function as pentameric, ligand-gated cation channels with high calcium permeability among other activities. nAChRs are excitatory neurotrasnmitter receptors formed by a collection of nAChR subunits known to mediate synaptic transmission in the nervous system and the neuromuscular junction. Each nAchR subunit confers differential attributes to channel properties, including activation, deactivation and desensitization kinetics, pH sensitivity, cation permeability, and binding to allosteric modulators. CHRNB4 forms heteropentameric neuronal acetylcholine receptors with CHRNA2, CHRNA3 and CHRNA4, as well as CHRNA5 and CHRNB3 as accesory subunits. CHRNA3:CHRNB4 being predominant in neurons of the autonomic ganglia, it is known as ganglionic nicotinic receptor. CHRNA3:CHRNB4 or CHRNA3:CHRNA5:CHRNB4 play also an important role in the habenulo-interpeduncular tract, modulating the mesolimbic dopamine system and affecting reward circuits and addiction. Hypothalamic CHRNA3:CHRNB4 nAChR activation by nicotine leads to activation of POMC neurons and a decrease in food intake. This is Neuronal acetylcholine receptor subunit beta-4 from Homo sapiens (Human).